Reading from the N-terminus, the 105-residue chain is UPF0148 protein PYRAB12700 (105 aa).

This sequence belongs to the UPF0148 family.

The chain is UPF0148 protein PYRAB12700 from Pyrococcus abyssi (strain GE5 / Orsay).